The primary structure comprises 332 residues: DNA packaging protein (332 aa).

Positions 1 to 207 are ATPase; sequence MDKSLFYNPQ…SERRKTRFGR (207 aa). 24 to 31 provides a ligand contact to ATP; that stretch reads GARGIGKS. Residues 233–332 form a DNA-binding region; the sequence is KRSKDSKFVF…YELFRKMRIQ (100 aa).

It belongs to the phi29likevirus gp16 family. As to quaternary structure, homopentamer. Interacts with the packaging RNA (pRNA). Part of a DNA-gp3-gp16 complex.

It carries out the reaction ATP + H2O = ADP + phosphate + H(+). In terms of biological role, ATPase required for the genome encapsidation reaction. Part of the active packaging motor via the binding to the packaging RNA (pRNA), itself fixed to the head-tail connector at the unique portal vertex of the prohead. Binds and supercoils the pre-formed, unit-length DNA bound to gp3 to produce an initiation complex for DNA packaging. Provides the energy to actively pump the viral DNA into the prohead. Approximately one molecule of ATP is used in the packaging of 2 bp of viral DNA. ATP hydrolysis results in a conformational change that causes the arginine/lysine finger of one subunit to move into the active site of its neighbor, where it interacts with the negatively charged oxygens on the gamma-phosphate of ATP. After packaging, the ATPase and the pRNA are released from the prohead. This chain is DNA packaging protein (16), found in Bacillus subtilis (Bacteriophage PZA).